Consider the following 343-residue polypeptide: Protease inhibitor Egf1.5a (343 aa).

A signal peptide spans M1–A28. Residues C52–C104 enclose the TIL domain.

The protein belongs to the polydnaviridae EGF-like motif protein family. In terms of assembly, interacts with host PAP1, PAP3 and SPH2.

Its function is as follows. Counteracts the host humoral immune response by inhibiting the processing and the amidolytic activity of host PAP1 and PAP3. Thereby, melanization of host hemolymph, normally producing several reactive intermediates toxic for viruses, is deregulated and proper immune response cannot occur. The polypeptide is Protease inhibitor Egf1.5a (O1) (Microplitis demolitor bracovirus (isolate Webb) (MdBV)).